The chain runs to 639 residues: Tubulin--tyrosine ligase-like protein 12 (639 aa).

The 345-residue stretch at 295–639 (PQGHVFRVHC…TDNCHVTRII (345 aa)) folds into the TTL domain. Residues 445-448 (SKYI), lysine 463, and aspartate 465 contribute to the ATP site.

Belongs to the tubulin--tyrosine ligase family. Interacts with MAVS; the interaction prevents MAVS binding to TBK1 and IKBKE. Interacts (via N-terminus) with TBK1 (via protein kinase domain). Interacts (via TTL domain) with IKBKE (via protein kinase domain). Interacts with tubulin alpha. Interacts with histone H3 and histone H4 (when trimethylated at 'Lys-20' (H4K20me3)). Interacts with CBX3. In terms of tissue distribution, widely expressed with highest levels in brain, kidney, liver, lung, muscle and testis.

It is found in the cytoplasm. The protein localises to the midbody. The protein resides in the cytoskeleton. It localises to the microtubule organizing center. Its subcellular location is the centrosome. It is found in the spindle. The protein localises to the nucleus. Negatively regulates post-translational modifications of tubulin, including detyrosination of the C-terminus and polyglutamylation of glutamate residues. Also, indirectly promotes histone H4 trimethylation at 'Lys-20' (H4K20me3). Probably by controlling tubulin and/or histone H4 post-translational modifications, plays a role in mitosis and in maintaining chromosome number stability. During RNA virus-mediated infection, acts as a negative regulator of the RIG-I pathway by preventing MAVS binding to TBK1 and IKBKE. The polypeptide is Tubulin--tyrosine ligase-like protein 12 (Mus musculus (Mouse)).